A 678-amino-acid polypeptide reads, in one-letter code: MSEPRKILVTSALPYANGSIHLGHMLEYIQTDMWVRFQKMRGNQAVYVCADDAHGSAIMLRAEREGITSEQLIDAVRAEHMGDFADFLVDFDNYHSTHSEENRELSSAIYLKLRDAGHIDTRPVTQYFDPEKQMFLADRFIKGTCPKCGTADQYGDNCEACGATYAPTELKDPKSAISGATPVLKESLHYFFKLPDFEAMLKQWTRSGALQESVANKLAEWLDSGLQQWDISRDAPYFGFEIPDAPGKYFYVWLDAPIGYMASFKNLCARRPELDFDAFWGKDSSAELYHFIGKDIVNFHALFWPAMLEGAGYRKPTALNVHGYLTVNGQKMSKSRGTFVKARTYLDHLDPEYLRYYYASKLGRGVEDLDLNLEDFVQKVNSDLVGKVVNIASRCAGFIHKGNAGVLVGADPAPELLAAFREAAPGIAEAYEARDFNRAMREIMALADRANAWIAEQAPWALAKQEGQQDKVQAVCGLGINLFRQLVIFLKPVLPKLAAAAEAFLNVAPLTWADHRTLLANHQLNPFQPLMTRIEPAKVEAMIEASKEDLAAAASQPAGNGELVKEPIAAEIDFDAFAAVDLRIALIEKCEFVEGADKLLRLSLDIGDAKRNVFSGIKSAYPDPSALEGRLTLYVANLAPRKMKFGVSEGMVLAAGPGGEEIYLLSPDSGAKPGQRVK.

Positions 14–24 match the 'HIGH' region motif; sequence PYANGSIHLGH. Positions 145, 148, 158, and 161 each coordinate Zn(2+). Positions 331–335 match the 'KMSKS' region motif; sequence KMSKS. ATP is bound at residue Lys-334. A tRNA-binding domain is found at 576 to 678; it reads AFAAVDLRIA…SGAKPGQRVK (103 aa).

Belongs to the class-I aminoacyl-tRNA synthetase family. MetG type 1 subfamily. In terms of assembly, homodimer. The cofactor is Zn(2+).

The protein localises to the cytoplasm. It carries out the reaction tRNA(Met) + L-methionine + ATP = L-methionyl-tRNA(Met) + AMP + diphosphate. In terms of biological role, is required not only for elongation of protein synthesis but also for the initiation of all mRNA translation through initiator tRNA(fMet) aminoacylation. In Pseudomonas aeruginosa (strain UCBPP-PA14), this protein is Methionine--tRNA ligase.